The primary structure comprises 740 residues: 1,4-alpha-glucan branching enzyme GlgB (740 aa).

The active-site Nucleophile is the aspartate 414. Glutamate 467 acts as the Proton donor in catalysis.

Belongs to the glycosyl hydrolase 13 family. GlgB subfamily. As to quaternary structure, monomer.

The catalysed reaction is Transfers a segment of a (1-&gt;4)-alpha-D-glucan chain to a primary hydroxy group in a similar glucan chain.. It participates in glycan biosynthesis; glycogen biosynthesis. In terms of biological role, catalyzes the formation of the alpha-1,6-glucosidic linkages in glycogen by scission of a 1,4-alpha-linked oligosaccharide from growing alpha-1,4-glucan chains and the subsequent attachment of the oligosaccharide to the alpha-1,6 position. In Rhodospirillum rubrum (strain ATCC 11170 / ATH 1.1.1 / DSM 467 / LMG 4362 / NCIMB 8255 / S1), this protein is 1,4-alpha-glucan branching enzyme GlgB.